An 83-amino-acid polypeptide reads, in one-letter code: Exodeoxyribonuclease 7 small subunit (83 aa).

This sequence belongs to the XseB family. As to quaternary structure, heterooligomer composed of large and small subunits.

The protein resides in the cytoplasm. The enzyme catalyses Exonucleolytic cleavage in either 5'- to 3'- or 3'- to 5'-direction to yield nucleoside 5'-phosphates.. Functionally, bidirectionally degrades single-stranded DNA into large acid-insoluble oligonucleotides, which are then degraded further into small acid-soluble oligonucleotides. The chain is Exodeoxyribonuclease 7 small subunit from Bradyrhizobium diazoefficiens (strain JCM 10833 / BCRC 13528 / IAM 13628 / NBRC 14792 / USDA 110).